The sequence spans 439 residues: Trigger factor (439 aa).

Positions 163–248 (GDIAVIDFEG…LNQIKERVLP (86 aa)) constitute a PPIase FKBP-type domain.

It belongs to the FKBP-type PPIase family. Tig subfamily.

The protein localises to the cytoplasm. It carries out the reaction [protein]-peptidylproline (omega=180) = [protein]-peptidylproline (omega=0). In terms of biological role, involved in protein export. Acts as a chaperone by maintaining the newly synthesized protein in an open conformation. Functions as a peptidyl-prolyl cis-trans isomerase. The protein is Trigger factor of Syntrophotalea carbinolica (strain DSM 2380 / NBRC 103641 / GraBd1) (Pelobacter carbinolicus).